We begin with the raw amino-acid sequence, 318 residues long: Isoeugenol synthase 1 (318 aa).

Residues 10-13 (TGYI), 32-43 (ARPLTPDSTPSS), Arg33, 84-86 (VPM), 109-111 (SEF), Lys131, and 151-153 (NCF) contribute to the NADP(+) site. Catalysis depends on Lys131, which acts as the Proton donor/acceptor. Residue Pro260 coordinates substrate.

Belongs to the NmrA-type oxidoreductase family. Mostly expressed in petals, and, to a lower extent, in sepals, stamens and pistils.

It carries out the reaction (E)-isoeugenol + acetate + NADP(+) = (E)-coniferyl acetate + NADPH. Its pathway is aromatic compound metabolism; phenylpropanoid biosynthesis. Its function is as follows. Catalyzes the synthesis of the phenylpropene isoeugenol from coniferyl acetate. Phenylpropenes are the primary constituents of various essential plant oils. They are produced as antimicrobial and antianimal compounds, or as floral attractants of pollinators. Isoeugenol is a characteristic aromatic constituent of spices and a floral volatile compound. The chain is Isoeugenol synthase 1 from Clarkia breweri (Fairy fans).